The following is a 152-amino-acid chain: Transcriptional regulator MraZ (152 aa).

SpoVT-AbrB domains lie at 5–52 (ASAI…PIHE) and 81–124 (AHEV…DEQS).

It belongs to the MraZ family. As to quaternary structure, forms oligomers.

Its subcellular location is the cytoplasm. It localises to the nucleoid. In Shewanella baltica (strain OS195), this protein is Transcriptional regulator MraZ.